A 1002-amino-acid chain; its full sequence is Lon protease homolog, mitochondrial (1002 aa).

Residues 102–313 (VIALPLPHRP…LTLELVKKEM (212 aa)) form the Lon N-terminal domain. An ATP-binding site is contributed by 468–475 (GPPGVGKT). The 185-residue stretch at 811-995 (QTPVGVVMGL…NEIFDIAFQS (185 aa)) folds into the Lon proteolytic domain. Residues S901 and K944 contribute to the active site.

The protein belongs to the peptidase S16 family. As to quaternary structure, homohexamer or homoheptamer. Organized in a ring with a central cavity.

The protein localises to the mitochondrion matrix. It catalyses the reaction Hydrolysis of proteins in presence of ATP.. Its function is as follows. ATP-dependent serine protease that mediates the selective degradation of misfolded, unassembled or oxidatively damaged polypeptides as well as certain short-lived regulatory proteins in the mitochondrial matrix. May also have a chaperone function in the assembly of inner membrane protein complexes. Participates in the regulation of mitochondrial gene expression and in the maintenance of the integrity of the mitochondrial genome. Binds to mitochondrial DNA in a site-specific manner. In Oryza sativa subsp. japonica (Rice), this protein is Lon protease homolog, mitochondrial.